Reading from the N-terminus, the 180-residue chain is tRNA (cytidine(56)-2'-O)-methyltransferase (180 aa).

S-adenosyl-L-methionine is bound by residues leucine 82, glycine 112–valine 116, and valine 130–glutamate 137.

The protein belongs to the aTrm56 family. In terms of assembly, homodimer.

The protein resides in the cytoplasm. It catalyses the reaction cytidine(56) in tRNA + S-adenosyl-L-methionine = 2'-O-methylcytidine(56) in tRNA + S-adenosyl-L-homocysteine + H(+). Functionally, specifically catalyzes the AdoMet-dependent 2'-O-ribose methylation of cytidine at position 56 in tRNAs. The chain is tRNA (cytidine(56)-2'-O)-methyltransferase from Methanococcus vannielii (strain ATCC 35089 / DSM 1224 / JCM 13029 / OCM 148 / SB).